A 93-amino-acid chain; its full sequence is Alpha-defensin 10 (93 aa).

Positions 1-19 (MKTLVLLSALVLLAFQVQA) are cleaved as a signal peptide. A propeptide spanning residues 20 to 58 (DPIQNTDEETKTEEQPGEDDQAVSVSFGDPEGSSLQEES) is cleaved from the precursor. The disordered stretch occupies residues 22 to 56 (IQNTDEETKTEEQPGEDDQAVSVSFGDPEGSSLQE). Intrachain disulfides connect cysteine 64-cysteine 92, cysteine 66-cysteine 81, and cysteine 71-cysteine 91.

The protein belongs to the alpha-defensin family. In terms of tissue distribution, paneth cells of the small bowel.

The protein localises to the secreted. In terms of biological role, probably contributes to the antimicrobial barrier function of the small bowel mucosa. The protein is Alpha-defensin 10 (Defa10) of Mus musculus (Mouse).